The following is a 377-amino-acid chain: Membrane progestin receptor epsilon (377 aa).

Residues 1–40 (MPRRLQPRGAGTKGPPAPAPAASGAARNSHSAASRDPPAS) are disordered. Topologically, residues 1–86 (MPRRLQPRGA…VLKPTNETLN (86 aa)) are cytoplasmic. A compositionally biased stretch (low complexity) spans 9–26 (GAGTKGPPAPAPAASGAA). Residues 87 to 107 (FWTHFIPLLLFLSKFCRLFFL) traverse the membrane as a helical segment. The Extracellular portion of the chain corresponds to 108–116 (SGGDVPFHH). The helical transmembrane segment at 117 to 137 (PWLLPLWCYASGVLLTFAMSC) threads the bilayer. Residues 138–162 (TAHVFSCLSLRLRAAFFYLDYASIS) lie on the Cytoplasmic side of the membrane. The helical transmembrane segment at 163–183 (YYGFGSTVAYYYYLLPGLSLL) threads the bilayer. Residues 184–205 (DARVMTPYLQQRLGWHVDCTRL) lie on the Extracellular side of the membrane. Residues 206–226 (IAAYRALVLPVAFVLAVACTV) traverse the membrane as a helical segment. The Cytoplasmic portion of the chain corresponds to 227 to 243 (ACCKSRTDWCTYPFALR). Residues 244–264 (TFVFVMPLSMACPIMLESWLF) traverse the membrane as a helical segment. Residues 265–301 (DLRGENPTLFVHFYRRYFWLVVAAFFNVSKIPERIQP) are Extracellular-facing. The helical transmembrane segment at 302 to 322 (GLFDIIGHSHQLFHIFTFLSI) threads the bilayer. Residues 323 to 343 (YDQVYYVEEGLRQFLQAPPAA) lie on the Cytoplasmic side of the membrane. The chain crosses the membrane as a helical span at residues 344 to 364 (PTFSGTVGYMLLLVVCLGLVI). Topologically, residues 365–377 (RKFLNSSEFCSKK) are extracellular.

It belongs to the ADIPOR family. Homodimer. As to expression, expression levels vary widely in a range of tissues. Expressed in the brain, at high level in the pituitary gland and also in hypothalamus, limbic system, caudate nucleus accumens, pons and olfactory bulb.

It is found in the cell membrane. Plasma membrane progesterone (P4) receptor coupled to G proteins. Seems to act through a G(s) mediated pathway. May be involved in regulating rapid P4 signaling in the nervous system. Also binds dehydroepiandrosterone (DHEA), pregnanolone, pregnenolone and allopregnanolone. This Homo sapiens (Human) protein is Membrane progestin receptor epsilon.